The primary structure comprises 360 residues: Chorismate synthase (360 aa).

Residues arginine 48 and arginine 54 each coordinate NADP(+). FMN contacts are provided by residues 125–127 (RSS), 246–247 (NA), glycine 286, 301–305 (KPTSS), and arginine 327.

The protein belongs to the chorismate synthase family. In terms of assembly, homotetramer. FMNH2 is required as a cofactor.

The enzyme catalyses 5-O-(1-carboxyvinyl)-3-phosphoshikimate = chorismate + phosphate. The protein operates within metabolic intermediate biosynthesis; chorismate biosynthesis; chorismate from D-erythrose 4-phosphate and phosphoenolpyruvate: step 7/7. In terms of biological role, catalyzes the anti-1,4-elimination of the C-3 phosphate and the C-6 proR hydrogen from 5-enolpyruvylshikimate-3-phosphate (EPSP) to yield chorismate, which is the branch point compound that serves as the starting substrate for the three terminal pathways of aromatic amino acid biosynthesis. This reaction introduces a second double bond into the aromatic ring system. This Actinobacillus pleuropneumoniae serotype 7 (strain AP76) protein is Chorismate synthase.